Here is a 273-residue protein sequence, read N- to C-terminus: Putative pyruvate, phosphate dikinase regulatory protein (273 aa).

149 to 156 lines the ADP pocket; that stretch reads GPSRTSKT.

This sequence belongs to the pyruvate, phosphate/water dikinase regulatory protein family. PDRP subfamily.

It carries out the reaction N(tele)-phospho-L-histidyl/L-threonyl-[pyruvate, phosphate dikinase] + ADP = N(tele)-phospho-L-histidyl/O-phospho-L-threonyl-[pyruvate, phosphate dikinase] + AMP + H(+). The enzyme catalyses N(tele)-phospho-L-histidyl/O-phospho-L-threonyl-[pyruvate, phosphate dikinase] + phosphate + H(+) = N(tele)-phospho-L-histidyl/L-threonyl-[pyruvate, phosphate dikinase] + diphosphate. Functionally, bifunctional serine/threonine kinase and phosphorylase involved in the regulation of the pyruvate, phosphate dikinase (PPDK) by catalyzing its phosphorylation/dephosphorylation. This chain is Putative pyruvate, phosphate dikinase regulatory protein, found in Rickettsia akari (strain Hartford).